A 678-amino-acid chain; its full sequence is MELRSYQWEVIMPALEGKNIIIWLPTGAGKTRAAAYVAKRHLETVDGAKVVVLVNRVHLVTQHGEEFRRMLDGRWTVTTLSGDMGPRAGFGHLARCHDLLICTAELLQMALTSPEEEEHVELTVFSLIVVDECHHTHKDTVYNVIMSQYLELKLQRAQPLPQVLGLTASPGTGGASKLDGAINHVLQLCANLDTWCIMSPQNCCPQLQEHSQQPCKQYNLCHRRSQDPFGDLLKKLMDQIHDHLEMPELSRKFGTQMYEQQVVKLSEAAALAGLQEQRVYALHLRRYNDALLIHDTVRAVDALAALQDFYHREHVTKTQILCAERRLLALFDDRKNELAHLATHGPENPKLEMLEKILQRQFSSSNSPRGIIFTRTRQSAHSLLLWLQQQQGLQTVDIRAQLLIGAGNSSQSTHMTQRDQQEVIQKFQDGTLNLLVATSVAEEGLDIPHCNVVVRYGLLTNEISMVQARGRARADQSVYAFVATEGSRELKRELINEALETLMEQAVAAVQKMDQAEYQAKIRDLQQAALTKRAAQAAQRENQRQQFPVEHVQLLCINCMVAVGHGSDLRKVEGTHHVNVNPNFSNYYNVSRDPVVINKVFKDWKPGGVISCRNCGEVWGLQMIYKSVKLPVLKVRSMLLETPQGRIQAKKWSRVPFSVPDFDFLQHCAENLSDLSLD.

In terms of domain architecture, Helicase ATP-binding spans 11 to 188; sequence IMPALEGKNI…DGAINHVLQL (178 aa). 24 to 31 contributes to the ATP binding site; that stretch reads LPTGAGKT. The DECH box motif lies at 131–134; that stretch reads DECH. The 165-residue stretch at 350 to 514 folds into the Helicase C-terminal domain; the sequence is KLEMLEKILQ…QAVAAVQKMD (165 aa). The stretch at 489–546 forms a coiled coil; sequence ELKRELINEALETLMEQAVAAVQKMDQAEYQAKIRDLQQAALTKRAAQAAQRENQRQQ. In terms of domain architecture, RLR CTR spans 539 to 669; that stretch reads QRENQRQQFP…PDFDFLQHCA (131 aa). Residues Cys-556, Cys-559, Cys-612, and Cys-615 each coordinate Zn(2+). The interval 572 to 655 is RNA-binding; sequence VEGTHHVNVN…RIQAKKWSRV (84 aa).

It belongs to the helicase family. RLR subfamily. As to quaternary structure, monomer in the absence of dsRNA. Homodimer in the presence of dsRNA. Interacts with RIGI (via CARD domain), MAVS/IPS1 and DDX60. Found in a complex with RIGI and IFIH1/MDA5. Interacts with ANKRD17. Directly interacts with ATG5 and ATG12, either as ATG5 and ATG12 monomers or as ATG12-ATG5 conjugates. (Microbial infection) Interacts (via helicase C-terminal domain) with non-structural protein V of paramyxoviruses including human parainfluenza 2 virus, human parainfluenza 5 virus, measles virus, mumps virus, hendra virus and nipah virus. As to expression, expressed in testis, nerve and spleen. Also expressed in the brain.

The protein resides in the cytoplasm. The catalysed reaction is ATP + H2O = ADP + phosphate + H(+). Its function is as follows. Acts as a regulator of RIGI and IFIH1/MDA5 mediated antiviral signaling. Cannot initiate antiviral signaling as it lacks the CARD domain required for activating MAVS/IPS1-dependent signaling events. Can have both negative and positive regulatory functions related to RIGI and IFIH1/MDA5 signaling and this role in regulating signaling may be complex and could probably depend on characteristics of the infecting virus or target cells, or both. Its inhibitory action on RIG-I signaling may involve the following mechanisms: competition with RIGI for binding to the viral RNA, binding to RIGI and inhibiting its dimerization and interaction with MAVS/IPS1, competing with IKBKE in its binding to MAVS/IPS1 thereby inhibiting activation of interferon regulatory factor 3 (IRF3). Its positive regulatory role may involve unwinding or stripping nucleoproteins of viral RNA thereby facilitating their recognition by RIGI and IFIH1/MDA5. Involved in the innate immune response to various RNA viruses and some DNA viruses such as poxviruses and coronavirus SARS-CoV-2, and also to the bacterial pathogen Listeria monocytogenes. Can bind both ssRNA and dsRNA, with a higher affinity for dsRNA. Shows a preference to 5'-triphosphorylated RNA, although it can recognize RNA lacking a 5'-triphosphate. The polypeptide is ATP-dependent RNA helicase DHX58 (Homo sapiens (Human)).